Consider the following 415-residue polypeptide: Vascular endothelial growth factor C (415 aa).

The N-terminal stretch at 1–31 (MHLLCFLSLACSLLAAALIPSPREAPATVAA) is a signal peptide. Positions 32–107 (FESGLGFSEA…RTGDSVKFAA (76 aa)) are excised as a propeptide. 3 disulfide bridges follow: C127/C169, C158/C205, and C162/C207. Residues N171, N201, and N236 are each glycosylated (N-linked (GlcNAc...) asparagine). Residues 224 to 415 (SLPATLPQCQ…PSYWKRPHLN (192 aa)) constitute a propeptide that is removed on maturation. 4 consecutive repeat copies span residues 276–291 (CGPN…QCVC), 300–315 (CGPH…QCVC), 324–339 (CGAN…QCVC), and 343–358 (CPRN…ACEC). A 4 X 16 AA repeats of C-X(10)-C-X-C-X(1,3)-C region spans residues 276-358 (CGPNKELDED…LNPGKCACEC (83 aa)).

It belongs to the PDGF/VEGF growth factor family. Homodimer; non-covalent and antiparallel. Interacts with FLT4/VEGFR3; the interaction is required for FLT4/VEGFR3 homodimarization and activation. Post-translationally, undergoes a complex proteolytic maturation which generates a variety of processed secreted forms with increased activity toward VEGFR-3, but only the fully processed form could activate VEGFR-2. VEGF-C first form an antiparallel homodimer linked by disulfide bonds. Before secretion, a cleavage occurs between Arg-223 and Ser-224 producing a heterotetramer. The next extracellular step of the processing removes the N-terminal propeptide. Finally the mature VEGF-C is composed mostly of two VEGF homology domains (VHDs) bound by non-covalent interactions. In terms of tissue distribution, expressed in adult heart, brain, spleen, lung, liver, skeletal muscle, kidney, testis and intestine with higher levels in heart, brain and kidney. Isoform 4 levels are very low. Isoform 3 is mostly expressed in liver and has reduced expression level in other tissues. Isoform 2 is mostly expressed in brain and kidney, although a lower level expression in other tissues is also detectable.

The protein localises to the secreted. Functionally, growth factor active in angiogenesis, and endothelial cell growth, stimulating their proliferation and migration and also has effects on the permeability of blood vessels. May function in angiogenesis of the venous and lymphatic vascular systems during embryogenesis, and also in the maintenance of differentiated lymphatic endothelium in adults. Binds and activates KDR/VEGFR2 and FLT4/VEGFR3 receptors. This Mus musculus (Mouse) protein is Vascular endothelial growth factor C (Vegfc).